Consider the following 352-residue polypeptide: Sphingosine 1-phosphate receptor 2 (352 aa).

Over 1–34 (MGGLYSEYLNPEKVQEHYNYTKETLDMQETPSRK) the chain is Extracellular. Asparagine 19 is a glycosylation site (N-linked (GlcNAc...) asparagine). A helical membrane pass occupies residues 35–59 (VASAFIIILCCAIVVENLLVLIAVA). At 60–66 (RNSKFHS) the chain is on the cytoplasmic side. Residues 67-95 (AMYLFLGNLAASDLLAGVAFVANTLLSGP) traverse the membrane as a helical segment. The Extracellular segment spans residues 96–109 (VTLSLTPLQWFARE). A helical membrane pass occupies residues 110 to 128 (GSAFITLSASVFSLLAIAI). At 129-147 (ERQVAIAKVKLYGSDKSCR) the chain is on the cytoplasmic side. The helical transmembrane segment at 148 to 173 (MLMLIGASWLISLILGGLPILGWNCL) threads the bilayer. Residues 174–189 (DHLEACSTVLPLYAKH) are Extracellular-facing. Residues 190-210 (YVLCVVTIFSVILLAIVALYV) traverse the membrane as a helical segment. Residues 211-233 (RIYFVVRSSHADVAGPQTLALLK) are Cytoplasmic-facing. The chain crosses the membrane as a helical span at residues 234-255 (TVTIVLGVFIICWLPAFSILLL). The Extracellular portion of the chain corresponds to 256–271 (DSTCPVRACPVLYKAH). Residues 272–292 (YFFAFATLNSLLNPVIYTWRS) form a helical membrane-spanning segment. At 293-352 (RDLRREVLRPLLCWRQGKGATGRRGGNPGHRLLPLRSSSSLERGLHMPTSPTFLEGNTVV) the chain is on the cytoplasmic side. Cysteine 305 is lipidated: S-palmitoyl cysteine.

Belongs to the G-protein coupled receptor 1 family. Expressed in all developing tissues with highest levels detected in primitive, transformed cells. Relative abundance: lung &gt; kidney = skin = gut &gt; spleen &gt; brain &gt; liver.

It localises to the cell membrane. Receptor for the lysosphingolipid sphingosine 1-phosphate (S1P). S1P is a bioactive lysophospholipid that elicits diverse physiological effects on most types of cells and tissues. Receptor for the chemokine-like protein FAM19A5. Mediates the inhibitory effect of FAM19A5 on vascular smooth muscle cell proliferation and migration. In lymphoid follicles, couples the binding of S1P to the activation of GNA13 and downstream inhibition of AKT activation leading to suppression of germinal center (GC) B cell growth and migration outside the GC niche. This chain is Sphingosine 1-phosphate receptor 2 (S1pr2), found in Rattus norvegicus (Rat).